A 561-amino-acid chain; its full sequence is Urocanate hydratase (561 aa).

NAD(+)-binding positions include 52-53, Gln-130, 176-178, Glu-196, Arg-201, 242-243, 263-267, 273-274, and Tyr-322; these read GG, GMG, NA, QTSAH, and YL. Residue Cys-410 is part of the active site. Residue Gly-492 participates in NAD(+) binding.

This sequence belongs to the urocanase family. NAD(+) serves as cofactor.

It localises to the cytoplasm. It carries out the reaction 4-imidazolone-5-propanoate = trans-urocanate + H2O. It functions in the pathway amino-acid degradation; L-histidine degradation into L-glutamate; N-formimidoyl-L-glutamate from L-histidine: step 2/3. Functionally, catalyzes the conversion of urocanate to 4-imidazolone-5-propionate. This Salmonella agona (strain SL483) protein is Urocanate hydratase.